We begin with the raw amino-acid sequence, 543 residues long: Cytochrome P450 52A1 (543 aa).

Residues 1-28 (MSSSPSIAQEFLATITPYVEYCQENYTK) are Lumenal-facing. Residues 29-48 (WYYFIPLVILSLNLISMLHT) form a helical membrane-spanning segment. Residues 49–543 (KYLERKFKAK…GAEVQMYLIL (495 aa)) are Cytoplasmic-facing. Cys-487 contacts heme.

The protein belongs to the cytochrome P450 family. Requires heme as cofactor.

It localises to the endoplasmic reticulum membrane. Functionally, together with an NADPH cytochrome P450 the enzyme system catalyzes the terminal hydroxylation as the first step in the assimilation of alkanes and fatty acids. The polypeptide is Cytochrome P450 52A1 (CYP52A1) (Candida tropicalis (Yeast)).